The sequence spans 173 residues: Ferric citrate uptake sigma factor FecI (173 aa).

The Polymerase core binding signature appears at 40-52; the sequence is DIAQDTFLRVMVS. A DNA-binding region (H-T-H motif) is located at residues 139–158; sequence YSEIAHKLGVSISSVKKYVA.

It belongs to the sigma-70 factor family. ECF subfamily. Interacts with FecR (via cytoplasmic N-terminus).

Its function is as follows. Sigma factors are initiation factors that promote the attachment of RNA polymerase to specific initiation sites and are then released. This sigma factor regulates transcriptional activation of the fecABCDE operon which mediates ferric citrate transport. In Escherichia coli (strain K12), this protein is Ferric citrate uptake sigma factor FecI (fecI).